Consider the following 172-residue polypeptide: Peptidyl-prolyl cis-trans isomerase (172 aa).

The PPIase cyclophilin-type domain maps to 7 to 170 (FFDMTVGGAP…KVVKVADCGQ (164 aa)).

This sequence belongs to the cyclophilin-type PPIase family.

It localises to the cytoplasm. The enzyme catalyses [protein]-peptidylproline (omega=180) = [protein]-peptidylproline (omega=0). With respect to regulation, binds cyclosporin A (CsA). CsA mediates some of its effects via an inhibitory action on PPIase. In terms of biological role, PPIases accelerate the folding of proteins. It catalyzes the cis-trans isomerization of proline imidic peptide bonds in oligopeptides. The protein is Peptidyl-prolyl cis-trans isomerase (CYP) of Zea mays (Maize).